Reading from the N-terminus, the 32-residue chain is Cytochrome b6-f complex subunit 7 (32 aa).

A helical transmembrane segment spans residues 9 to 29 (AILSSVLVLVGLAVGFLLLKV).

This sequence belongs to the PetM family. As to quaternary structure, the 4 large subunits of the cytochrome b6-f complex are cytochrome b6, subunit IV (17 kDa polypeptide, PetD), cytochrome f and the Rieske protein, while the 4 small subunits are PetG, PetL, PetM and PetN. The complex functions as a dimer.

The protein resides in the plastid. It is found in the chloroplast thylakoid membrane. In terms of biological role, component of the cytochrome b6-f complex, which mediates electron transfer between photosystem II (PSII) and photosystem I (PSI), cyclic electron flow around PSI, and state transitions. The chain is Cytochrome b6-f complex subunit 7 from Porphyra purpurea (Red seaweed).